The primary structure comprises 375 residues: 2-oxoglutarate synthase subunit KorA (375 aa).

As to quaternary structure, heterotetramer of the KorA, KorB, KorC and KorD subunits.

The enzyme catalyses 2 oxidized [2Fe-2S]-[ferredoxin] + 2-oxoglutarate + CoA = succinyl-CoA + 2 reduced [2Fe-2S]-[ferredoxin] + CO2 + H(+). In Methanothermobacter marburgensis (strain ATCC BAA-927 / DSM 2133 / JCM 14651 / NBRC 100331 / OCM 82 / Marburg) (Methanobacterium thermoautotrophicum), this protein is 2-oxoglutarate synthase subunit KorA (korA).